The sequence spans 221 residues: Small ribosomal subunit protein uS2c (221 aa).

The protein belongs to the universal ribosomal protein uS2 family.

Its subcellular location is the plastid. The protein localises to the chloroplast. This chain is Small ribosomal subunit protein uS2c (rps2), found in Cyanidioschyzon merolae (strain NIES-3377 / 10D) (Unicellular red alga).